The following is a 244-amino-acid chain: tRNA (guanine-N(1)-)-methyltransferase (244 aa).

Residues G113 and 133–138 each bind S-adenosyl-L-methionine; that span reads IGDYVL.

Belongs to the RNA methyltransferase TrmD family. Homodimer.

It localises to the cytoplasm. The catalysed reaction is guanosine(37) in tRNA + S-adenosyl-L-methionine = N(1)-methylguanosine(37) in tRNA + S-adenosyl-L-homocysteine + H(+). Its function is as follows. Specifically methylates guanosine-37 in various tRNAs. The polypeptide is tRNA (guanine-N(1)-)-methyltransferase (Bacillus anthracis (strain A0248)).